A 133-amino-acid chain; its full sequence is Small ribosomal subunit protein uS8 (133 aa).

Belongs to the universal ribosomal protein uS8 family. As to quaternary structure, part of the 30S ribosomal subunit. Contacts proteins S5 and S12.

In terms of biological role, one of the primary rRNA binding proteins, it binds directly to 16S rRNA central domain where it helps coordinate assembly of the platform of the 30S subunit. The sequence is that of Small ribosomal subunit protein uS8 from Prochlorococcus marinus (strain MIT 9515).